A 171-amino-acid polypeptide reads, in one-letter code: ATP synthase subunit b 2 (171 aa).

Residues 9-29 (APWHHPVFWVAVAFVLFFVLF) traverse the membrane as a helical segment.

Belongs to the ATPase B chain family. In terms of assembly, F-type ATPases have 2 components, F(1) - the catalytic core - and F(0) - the membrane proton channel. F(1) has five subunits: alpha(3), beta(3), gamma(1), delta(1), epsilon(1). F(0) has three main subunits: a(1), b(2) and c(10-14). The alpha and beta chains form an alternating ring which encloses part of the gamma chain. F(1) is attached to F(0) by a central stalk formed by the gamma and epsilon chains, while a peripheral stalk is formed by the delta and b chains.

The protein localises to the cell inner membrane. F(1)F(0) ATP synthase produces ATP from ADP in the presence of a proton or sodium gradient. F-type ATPases consist of two structural domains, F(1) containing the extramembraneous catalytic core and F(0) containing the membrane proton channel, linked together by a central stalk and a peripheral stalk. During catalysis, ATP synthesis in the catalytic domain of F(1) is coupled via a rotary mechanism of the central stalk subunits to proton translocation. Its function is as follows. Component of the F(0) channel, it forms part of the peripheral stalk, linking F(1) to F(0). In Granulibacter bethesdensis (strain ATCC BAA-1260 / CGDNIH1), this protein is ATP synthase subunit b 2.